Here is a 386-residue protein sequence, read N- to C-terminus: MGMQMKNFKKMMTLMALCFSVAITTSGYATTLPDIPEPLKNGTGAIDNNGVIYVGLGTAGTSWYKIDLKKQHKDWERIKSFPGGAREQSVSVFLNDELYVFGGVGKKNSESPLQVYSDVYKYSPVKNTWQKVDTISPVGLTGHTGVKLNETMVLITGGVNEHIFDKYFIDIAAAAADESEKNKVIYNYFNKPAKDYFFNKIVFIYNAKENTWKNAGELPGAGTAGSSSVMGNNFLMLINGELKPGLRTDVIYRAMWDNDKLTWLKNSQLPPSPGEQQQEGLAGAFSGYSHGVLLVGGGANFPGAKQNYTNGKFYSHEGINKKWRDEVYGLINGHWQYMGKMKQPLGYGVSVSYGDEVFLIGGENAKGKPVSSVTSFTMRDGNLLIK.

A signal peptide spans 1–29 (MGMQMKNFKKMMTLMALCFSVAITTSGYA). Kelch repeat units lie at residues 51 to 95 (VIYV…VFLN), 97 to 149 (ELYV…VKLN), 151 to 186 (TMVL…KVIY), 187 to 232 (NYFN…VMGN), 235 to 284 (LMLI…LAGA), 306 to 355 (QNYT…SYGD), and 357 to 386 (VFLI…LLIK). E241 (proton acceptor) is an active-site residue.

The protein belongs to the NanM family. As to quaternary structure, homodimer.

The protein localises to the periplasm. It carries out the reaction N-acetyl-alpha-neuraminate = N-acetyl-beta-neuraminate. In terms of biological role, converts alpha-N-acetylneuranimic acid (Neu5Ac) to the beta-anomer, accelerating the equilibrium between the alpha- and beta-anomers. Probably facilitates sialidase-negative bacteria to compete successfully for limited amounts of extracellular Neu5Ac, which is likely taken up in the beta-anomer. In addition, the rapid removal of sialic acid from solution might be advantageous to the bacterium to damp down host responses. This is N-acetylneuraminate epimerase from Salmonella typhimurium (strain LT2 / SGSC1412 / ATCC 700720).